The chain runs to 529 residues: Bifunctional purine biosynthesis protein PurH (529 aa).

An MGS-like domain is found at 1–148; that stretch reads MQQRRPVRRA…KNHKDVAIVV (148 aa).

The protein belongs to the PurH family.

The enzyme catalyses (6R)-10-formyltetrahydrofolate + 5-amino-1-(5-phospho-beta-D-ribosyl)imidazole-4-carboxamide = 5-formamido-1-(5-phospho-D-ribosyl)imidazole-4-carboxamide + (6S)-5,6,7,8-tetrahydrofolate. It catalyses the reaction IMP + H2O = 5-formamido-1-(5-phospho-D-ribosyl)imidazole-4-carboxamide. It functions in the pathway purine metabolism; IMP biosynthesis via de novo pathway; 5-formamido-1-(5-phospho-D-ribosyl)imidazole-4-carboxamide from 5-amino-1-(5-phospho-D-ribosyl)imidazole-4-carboxamide (10-formyl THF route): step 1/1. It participates in purine metabolism; IMP biosynthesis via de novo pathway; IMP from 5-formamido-1-(5-phospho-D-ribosyl)imidazole-4-carboxamide: step 1/1. The chain is Bifunctional purine biosynthesis protein PurH from Klebsiella pneumoniae subsp. pneumoniae (strain ATCC 700721 / MGH 78578).